The following is a 425-amino-acid chain: UPF0761 membrane protein XC_3370 (425 aa).

Helical transmembrane passes span 48 to 68 (VFAL…FPAF), 105 to 125 (FTVA…HSIE), 154 to 174 (GTML…LPLF), 182 to 202 (LAEF…IVLI), 216 to 236 (ALPG…GFGF), and 250 to 270 (ALSA…SVLL).

Belongs to the UPF0761 family.

Its subcellular location is the cell inner membrane. This chain is UPF0761 membrane protein XC_3370, found in Xanthomonas campestris pv. campestris (strain 8004).